The following is a 780-amino-acid chain: MEEEARPAVGDGEAATPARETPPAAPAQARAASGGVPESAPEPKRRQLGTLLQPTVNKFSLRVFGSHKAVEIEQERVKSAGAWIIHPYSDFRFYWDLIMLLLMVGNLIVLPVGITFFKEENSPPWIVFNVLSDTFFLLDLVLNFRTGIVVEEGAEILLAPRAIRTRYLRTWFLVDLISSIPVDYIFLVVELEPRLDAEVYKTARALRIVRFTKILSLLRLLRLSRLIRYMHQWEEIFHMTYDLASAVVRIFNLIGMMLLLCHWDGCLQFLVPMLQDFPSDCWVSMNRMVNHSWGRQYSHALFKAMSHMLCIGYGQQAPVGMPDVWLTMLSMIVGATCYAMFIGHATALIQSLDSSRRQYQEKYKQVEQYMSFHKLPADTRQRIHEYYEHRYQGKMFDEESILGELSEPLREEIINFTCRGLVAHMPLFAHADPSFVTAVLTKLRFEVFQPGDLVVREGSVGRKMYFIQHGLLSVLARGARDTRLTDGSYFGEICLLTRGRRTASVRADTYCRLYSLSVDHFNAVLEEFPMMRRAFETVAMDRLRRIGKKNSILQRKRSEPSPGSSSGGVMEQHLVQHDRDMARGIRGLAPGTGARLSGKPVLWEPLVHAPLQAAAVTSNVAIALTHQRGPLPLSPDSPATLLARSARRSAGSPASPLVPVRAGPLLARGPWASTSRLPAPPARTLHASLSRTGRSQVSLLGPPPGGGGRRLGPRGRPLSASQPSLPQRATGDGSPRRKGSGSERLPPSGLLAKPPGTVQPSRSSVPEPVTPRGPQISANM.

The interval 1–47 (MEEEARPAVGDGEAATPARETPPAAPAQARAASGGVPESAPEPKRRQ) is disordered. Topologically, residues 1-96 (MEEEARPAVG…PYSDFRFYWD (96 aa)) are cytoplasmic. Over residues 13 to 32 (EAATPARETPPAAPAQARAA) the composition is skewed to low complexity. The involved in subunit assembly stretch occupies residues 45–90 (RRQLGTLLQPTVNKFSLRVFGSHKAVEIEQERVKSAGAWIIHPYSD). Residues 97-117 (LIMLLLMVGNLIVLPVGITFF) traverse the membrane as a helical segment. Residues 118–123 (KEENSP) lie on the Extracellular side of the membrane. The helical transmembrane segment at 124–144 (PWIVFNVLSDTFFLLDLVLNF) threads the bilayer. Over 145-170 (RTGIVVEEGAEILLAPRAIRTRYLRT) the chain is Cytoplasmic. The helical transmembrane segment at 171-191 (WFLVDLISSIPVDYIFLVVEL) threads the bilayer. Over 192–200 (EPRLDAEVY) the chain is Extracellular. Residues 201 to 221 (KTARALRIVRFTKILSLLRLL) traverse the membrane as a helical; Voltage-sensor segment. Over 222-252 (RLSRLIRYMHQWEEIFHMTYDLASAVVRIFN) the chain is Cytoplasmic. The chain crosses the membrane as a helical span at residues 253–273 (LIGMMLLLCHWDGCLQFLVPM). The Extracellular portion of the chain corresponds to 274 to 296 (LQDFPSDCWVSMNRMVNHSWGRQ). An N-linked (GlcNAc...) asparagine glycan is attached at Asn290. Positions 297-318 (YSHALFKAMSHMLCIGYGQQAP) form an intramembrane region, pore-forming. The Extracellular portion of the chain corresponds to 319–328 (VGMPDVWLTM). The helical transmembrane segment at 329–349 (LSMIVGATCYAMFIGHATALI) threads the bilayer. Residues 350–780 (QSLDSSRRQY…PRGPQISANM (431 aa)) are Cytoplasmic-facing. Positions 353–780 (DSSRRQYQEK…PRGPQISANM (428 aa)) are interaction with KCTD3. Gly491, Glu492, Cys494, Arg501, Thr502, Arg542, and Arg545 together coordinate 3',5'-cyclic AMP. The disordered stretch occupies residues 549–569 (KNSILQRKRSEPSPGSSSGGV). Ser634 is modified (phosphoserine). Positions 687–698 (ASLSRTGRSQVS) are enriched in polar residues. Residues 687–780 (ASLSRTGRSQ…PRGPQISANM (94 aa)) are disordered.

This sequence belongs to the potassium channel HCN family. In terms of assembly, homotetramer. The potassium channel is composed of a homo- or heterotetrameric complex of pore-forming subunits. Interacts with HCN1. Interacts with KCTD3; this interaction increases cell surface expression and current density of this channel. Interacts with PEX5L.

It is found in the cell membrane. It catalyses the reaction K(+)(in) = K(+)(out). It carries out the reaction Na(+)(in) = Na(+)(out). Its activity is regulated as follows. Inhibited by Cs(1+) and ivabradine. Unlike HCN2 and HCN4, HCN3 is insensitive to cyclic nucleotides, such as cAMP or cGMP. This lack of sensitivity of HCN3, despite harboring a functional cyclic nucleotide-binding domain (CNBD), may be explained by its shorter C-terminal sequence, which may alter the normal autoinhibition of the channel. Phosphatidylinositol-4,5-bisphosphate (PIP(2)) shifts HCN3 activation to more depolarized potentials and accelerated activation kinetics. Functionally, hyperpolarization-activated ion channel that are permeable to sodium and potassium ions, with an about 3:1 preference for potassium ions. Contributes to the native pacemaker currents in heart (If) and in neurons (Ih). In particular, plays a pivotal role in maintaining excitability and promoting rhythmic burst firing within hypothalamic nuclei. Exerts a significant influence on the configuration of the cardiac action potential waveform. Does not appear to play a prominent role in the processing of acute, neuropathic, or inflammatory pain. The protein is Potassium/sodium hyperpolarization-activated cyclic nucleotide-gated channel 3 (Hcn3) of Rattus norvegicus (Rat).